A 274-amino-acid polypeptide reads, in one-letter code: 2,3,4,5-tetrahydropyridine-2,6-dicarboxylate N-succinyltransferase (274 aa).

Residues R104 and D141 each coordinate substrate.

The protein belongs to the transferase hexapeptide repeat family. Homotrimer.

The protein localises to the cytoplasm. The enzyme catalyses (S)-2,3,4,5-tetrahydrodipicolinate + succinyl-CoA + H2O = (S)-2-succinylamino-6-oxoheptanedioate + CoA. It functions in the pathway amino-acid biosynthesis; L-lysine biosynthesis via DAP pathway; LL-2,6-diaminopimelate from (S)-tetrahydrodipicolinate (succinylase route): step 1/3. The protein is 2,3,4,5-tetrahydropyridine-2,6-dicarboxylate N-succinyltransferase of Shigella dysenteriae serotype 1 (strain Sd197).